We begin with the raw amino-acid sequence, 209 residues long: V-type ATP synthase subunit D (209 aa).

Belongs to the V-ATPase D subunit family.

In terms of biological role, produces ATP from ADP in the presence of a proton gradient across the membrane. The protein is V-type ATP synthase subunit D (atpD) of Chlamydia pneumoniae (Chlamydophila pneumoniae).